Here is a 506-residue protein sequence, read N- to C-terminus: Maturase K (506 aa).

The protein belongs to the intron maturase 2 family. MatK subfamily.

The protein localises to the plastid. The protein resides in the chloroplast. In terms of biological role, usually encoded in the trnK tRNA gene intron. Probably assists in splicing its own and other chloroplast group II introns. This chain is Maturase K, found in Trifolium incarnatum (Crimson clover).